Consider the following 297-residue polypeptide: MGKRIFLFLLSNILVITTIGIVLSIIGSLTGVGTYFTANGGIDIVALLVFSAVVGFVGSFMSLLMSRWMAKMAMGVQVLNPDKQTLSYEEQQLVDRVYKLSRAAGLTKMPEVGIYNSREVNAFATGPSKNRSLVAVSTGLLQEMDDDAVEGVLAHEVAHIANGDMVTMTLLQGIVNTFVVFFARIAAWAVSRVVREELAPIVHFIAVIVFQIVFSILGSLVVFAYSRHREYHADRGGADLAGKDKMIHALRSLEQYTSRVKEEQASVATLKINGKKHTSLFSTHPDLSDRIRRLEAK.

The next 2 helical transmembrane spans lie at 5–25 and 44–64; these read IFLFLLSNILVITTIGIVLSI and IVALLVFSAVVGFVGSFMSLL. Residue His-155 coordinates Zn(2+). Glu-156 is an active-site residue. A Zn(2+)-binding site is contributed by His-159. Helical transmembrane passes span 170–190 and 204–224; these read LLQGIVNTFVVFFARIAAWAV and FIAVIVFQIVFSILGSLVVFA. Position 230 (Glu-230) interacts with Zn(2+).

It belongs to the peptidase M48B family. It depends on Zn(2+) as a cofactor.

The protein resides in the cell membrane. This Bacillus licheniformis (strain ATCC 14580 / DSM 13 / JCM 2505 / CCUG 7422 / NBRC 12200 / NCIMB 9375 / NCTC 10341 / NRRL NRS-1264 / Gibson 46) protein is Protease HtpX homolog.